Reading from the N-terminus, the 338-residue chain is Trace amine-associated receptor 9 (338 aa).

Over 1-23 (MELCYENVNGSCIKSSYSPWPRA) the chain is Extracellular. An N-linked (GlcNAc...) asparagine glycan is attached at Asn9. Intrachain disulfides connect Cys12–Cys176 and Cys95–Cys180. Residues 24–48 (ILYAVLGLGALLAVFGNLLVITAIL) traverse the membrane as a helical segment. Residues 49–58 (HFKQLHTPTN) lie on the Cytoplasmic side of the membrane. Residues 59-80 (FLVASLACADFLVGVTVMPFST) traverse the membrane as a helical segment. Residues 81-95 (VRSVEGCWYFGDTYC) lie on the Extracellular side of the membrane. A helical transmembrane segment spans residues 96–118 (KFHTCFDTSFCFASLFHLCCISI). Spermidine contacts are provided by Asp102 and Thr103. Residues 119–138 (DRYVAVTDPLTYPTKFTISV) lie on the Cytoplasmic side of the membrane. Residues 139-160 (SGVCIALSWFFSVTYSFSIFYT) traverse the membrane as a helical segment. The Extracellular portion of the chain corresponds to 161 to 186 (GANEEGIEELVVALTCVGGCQAPLNQ). The tract at residues 164–177 (EEGIEELVVALTCV) is extracellular Loop 2 (ECL2). Residues 187 to 208 (NWVLLCFLLFFLPTVVMVFLYG) form a helical membrane-spanning segment. Over 209 to 246 (RIFLVAKQQARKIEGSANQPQASSESYKERVARRERKA) the chain is Cytoplasmic. The chain crosses the membrane as a helical span at residues 247-270 (AKTLGIAMAAFLVSWLPYIIDAVI). Residues 271–283 (DAYMNFITPAYVY) lie on the Extracellular side of the membrane. A helical transmembrane segment spans residues 284-304 (EILVWCVYYNSAMNPLIYAFF). Residues 305–338 (YPWFRKAIKLIVSGKVFRADSSRTNLFSEEAGAG) lie on the Cytoplasmic side of the membrane.

The protein belongs to the G-protein coupled receptor 1 family. In terms of tissue distribution, mainly expressed in neurons of the olfactory epithelium. Also expressed in the intestine.

It localises to the cell membrane. In terms of biological role, olfactory receptor specific for trace amines, such as triethylamine, N-methylpiperidine, N,N-dimethylcyclohexylamine (DMCHA), beta-phenylethylamine (beta-PEA), cadaverine (CAD) and polyamines such as spermidine. Trace amine compounds are enriched in animal body fluids and act on trace amine-associated receptors (TAARs) to elicit both intraspecific and interspecific innate behaviors. Trace amine-binding causes a conformation change that triggers signaling via G(s)-class of G alpha proteins (GNAL or GNAS). In mature olfactory sensory neurons, Taar9 is coupled with GNAL/G(olf)G alpha protein and mediates activation of adenylate cyclase activity to activate cAMP signaling and eventually transmit odorant signals to achieve membrane depolarization. In immature olfactory sensory neurons, Taar9 is coupled with GNAS/G(s) G alpha proteins. This chain is Trace amine-associated receptor 9, found in Rattus norvegicus (Rat).